A 243-amino-acid chain; its full sequence is Variant surface antigen E (243 aa).

An N-terminal signal peptide occupies residues 1 to 29 (MKKSIFSKKLLVSFGSLVTLAAIPLIAIS). Cys30 carries the N-palmitoyl cysteine lipid modification. Cys30 is lipidated: S-diacylglycerol cysteine. The interval 34 to 243 (TDNLSQSQQP…TTSDGQNQNK (210 aa)) is disordered. The segment covering 52–92 (GTNTENGSNNGSGSGTTNSSGGTNQSGSASGNGSSNSSVST) has biased composition (low complexity). Polar residues predominate over residues 93 to 243 (PDGQHSNPSN…TTSDGQNQNK (151 aa)). A run of 11 repeats spans residues 97–109 (HSNP…SDPK), 110–122 (ESNP…SDPK), 123–135 (ESNP…SDGQ), 136–148 (HSNP…SDPK), 149–161 (ESNP…SDGQ), 162–174 (HSNP…SDGQ), 175–187 (HSNP…SDGQ), 188–200 (HSNP…SDGQ), 201–213 (HSNP…SDGQ), 214–226 (HSNP…SDGQ), and 227–239 (HSNP…SDGQ). Residues 97–239 (HSNPSNPTTS…PSNPTTSDGQ (143 aa)) form an 11 X 13 AA tandem repeats region.

It localises to the cell membrane. In terms of biological role, responsible for the antigenic diversity for host adaptation. Expression in E.coli of a construct containing vlpD, vlpE, and vlpF yields antigenically distinguishable products corresponding to each gene. The chain is Variant surface antigen E (vlpE) from Mesomycoplasma hyorhinis (Mycoplasma hyorhinis).